The primary structure comprises 121 residues: Small ribosomal subunit protein uS13 (121 aa).

The disordered stretch occupies residues 90 to 121 (RHRRGLPVRGQHTKNNARTRKGKKVSIAGRKK).

Belongs to the universal ribosomal protein uS13 family. As to quaternary structure, part of the 30S ribosomal subunit. Forms a loose heterodimer with protein S19. Forms two bridges to the 50S subunit in the 70S ribosome.

Functionally, located at the top of the head of the 30S subunit, it contacts several helices of the 16S rRNA. In the 70S ribosome it contacts the 23S rRNA (bridge B1a) and protein L5 of the 50S subunit (bridge B1b), connecting the 2 subunits; these bridges are implicated in subunit movement. Contacts the tRNAs in the A and P-sites. This Lactiplantibacillus plantarum (strain ATCC BAA-793 / NCIMB 8826 / WCFS1) (Lactobacillus plantarum) protein is Small ribosomal subunit protein uS13.